Here is a 342-residue protein sequence, read N- to C-terminus: Cellular tumor antigen p53 (342 aa).

The tract at residues M1–E35 is transcription activation (acidic). Residues N68 to S255 mediate DNA binding. 4 residues coordinate Zn(2+): C142, H145, C201, and C205. The tract at residues R236–R243 is interaction with DNA. Residues D244–G256 show a composition bias toward basic and acidic residues. A disordered region spans residues D244–D287. The Bipartite nuclear localization signal motif lies at K261 to K278. Residues T271–S282 are compositionally biased toward low complexity. The oligomerization stretch occupies residues K288–T317. Positions L302–L313 match the Nuclear export signal motif. The interval G318–D342 is disordered. The basic (repression of DNA-binding) stretch occupies residues P319–K336.

The protein belongs to the p53 family. Binds DNA as a homotetramer. Zn(2+) serves as cofactor.

The protein resides in the cytoplasm. The protein localises to the nucleus. Its function is as follows. Multifunctional transcription factor that induces cell cycle arrest, DNA repair or apoptosis upon binding to its target DNA sequence. Acts as a tumor suppressor in many tumor types; induces growth arrest or apoptosis depending on the physiological circumstances and cell type. Negatively regulates cell division by controlling expression of a set of genes required for this process. One of the activated genes is an inhibitor of cyclin-dependent kinases. Apoptosis induction seems to be mediated either by stimulation of BAX and FAS antigen expression, or by repression of Bcl-2 expression. This Xiphophorus maculatus (Southern platyfish) protein is Cellular tumor antigen p53 (tp53).